A 346-amino-acid chain; its full sequence is Methylthioribose-1-phosphate isomerase (346 aa).

Residues 46–48 (RGA), R89, and Q196 contribute to the substrate site. Catalysis depends on D237, which acts as the Proton donor. 247–248 (NK) is a substrate binding site.

It belongs to the eIF-2B alpha/beta/delta subunits family. MtnA subfamily.

The catalysed reaction is 5-(methylsulfanyl)-alpha-D-ribose 1-phosphate = 5-(methylsulfanyl)-D-ribulose 1-phosphate. The protein operates within amino-acid biosynthesis; L-methionine biosynthesis via salvage pathway; L-methionine from S-methyl-5-thio-alpha-D-ribose 1-phosphate: step 1/6. Functionally, catalyzes the interconversion of methylthioribose-1-phosphate (MTR-1-P) into methylthioribulose-1-phosphate (MTRu-1-P). This is Methylthioribose-1-phosphate isomerase from Geotalea uraniireducens (strain Rf4) (Geobacter uraniireducens).